A 209-amino-acid chain; its full sequence is Uracil phosphoribosyltransferase (209 aa).

5-phospho-alpha-D-ribose 1-diphosphate contacts are provided by residues Arg79, Arg104, and 131–139 (DPMLATGGS). Uracil contacts are provided by residues Ile194 and 199-201 (GDA). Asp200 contacts 5-phospho-alpha-D-ribose 1-diphosphate.

It belongs to the UPRTase family. Mg(2+) is required as a cofactor.

The enzyme catalyses UMP + diphosphate = 5-phospho-alpha-D-ribose 1-diphosphate + uracil. The protein operates within pyrimidine metabolism; UMP biosynthesis via salvage pathway; UMP from uracil: step 1/1. Allosterically activated by GTP. Functionally, catalyzes the conversion of uracil and 5-phospho-alpha-D-ribose 1-diphosphate (PRPP) to UMP and diphosphate. The chain is Uracil phosphoribosyltransferase from Agathobacter rectalis (strain ATCC 33656 / DSM 3377 / JCM 17463 / KCTC 5835 / VPI 0990) (Eubacterium rectale).